The following is a 932-amino-acid chain: Isoleucine--tRNA ligase (932 aa).

The short motif at 58-68 (PYANGDIHIGH) is the 'HIGH' region element. Glutamate 570 is a binding site for L-isoleucyl-5'-AMP. Residues 611–615 (KMSKS) carry the 'KMSKS' region motif. Lysine 614 contributes to the ATP binding site. Zn(2+) contacts are provided by cysteine 895, cysteine 898, cysteine 915, and cysteine 918.

This sequence belongs to the class-I aminoacyl-tRNA synthetase family. IleS type 1 subfamily. Monomer. Zn(2+) is required as a cofactor.

It is found in the cytoplasm. It catalyses the reaction tRNA(Ile) + L-isoleucine + ATP = L-isoleucyl-tRNA(Ile) + AMP + diphosphate. In terms of biological role, catalyzes the attachment of isoleucine to tRNA(Ile). As IleRS can inadvertently accommodate and process structurally similar amino acids such as valine, to avoid such errors it has two additional distinct tRNA(Ile)-dependent editing activities. One activity is designated as 'pretransfer' editing and involves the hydrolysis of activated Val-AMP. The other activity is designated 'posttransfer' editing and involves deacylation of mischarged Val-tRNA(Ile). In Dechloromonas aromatica (strain RCB), this protein is Isoleucine--tRNA ligase.